We begin with the raw amino-acid sequence, 739 residues long: Glycine--tRNA ligase (739 aa).

The transit peptide at Met1–Leu36 directs the protein to the mitochondrion. Residue Ser35 is modified to Phosphoserine. A WHEP-TRS domain is found at Val63–Val119. Lys204 is modified (N6-acetyllysine). Glu299 lines the glycine pocket. Residues Arg331–Glu333 and Arg342–Val343 each bind ATP. Glu350 serves as a coordination point for glycine. A Phosphotyrosine modification is found at Tyr453. Glu457–Ile458 is an ATP binding site. Lys501 carries the N6-acetyllysine modification. Glu576–Ser578 is a binding site for glycine. ATP is bound at residue Arg583. Ser700 is subject to Phosphoserine. Thr736 bears the Phosphothreonine mark.

It belongs to the class-II aminoacyl-tRNA synthetase family. As to quaternary structure, homodimer. Widely expressed, including in brain and spinal cord. In terms of tissue distribution, expressed in brain, spinal cord, muscle, heart and spleen. As to expression, expressed in brain, spinal cord, muscle, heart, spleen and liver.

The protein localises to the cytoplasm. Its subcellular location is the cell projection. It localises to the axon. It is found in the secreted. The protein resides in the extracellular exosome. The protein localises to the mitochondrion. The enzyme catalyses tRNA(Gly) + glycine + ATP = glycyl-tRNA(Gly) + AMP + diphosphate. It catalyses the reaction 2 ATP + H(+) = P(1),P(4)-bis(5'-adenosyl) tetraphosphate + diphosphate. Ap4A synthesis is inhibited by tRNA, via the disruption of the second ATP-binding site by direct blocking and/or by tRNA-induced conformational change. Its function is as follows. Catalyzes the ATP-dependent ligation of glycine to the 3'-end of its cognate tRNA, via the formation of an aminoacyl-adenylate intermediate (Gly-AMP). Also produces diadenosine tetraphosphate (Ap4A), a universal pleiotropic signaling molecule needed for cell regulation pathways, by direct condensation of 2 ATPs. Thereby, may play a special role in Ap4A homeostasis. The polypeptide is Glycine--tRNA ligase (Homo sapiens (Human)).